The following is a 494-amino-acid chain: mRNA decay activator protein ZFP36L2 (494 aa).

A Phosphoserine modification is found at serine 57. The segment at 93–113 (GGPTSYGTLKEPSGGGGTALL) is disordered. The residue at position 125 (serine 125) is a Phosphoserine. The RNA-binding motif lies at 153–158 (RYKTEL). 2 C3H1-type zinc fingers span residues 153 to 181 (RYKTELCRPFEESGTCKYGEKCQFAHGFH) and 191 to 219 (KYKTELCRTFHTIGFCPYGPRCHFIHNAD). The interval 170-211 (YGEKCQFAHGFHELRSLTRHPKYKTELCRTFHTIGFCPYGPR) is RNA-binding. Threonine 238 bears the Phosphothreonine mark. Disordered regions lie at residues 257–293 (SLSFSGFPSGHHQPPGGLESPLLLDSPTSRTPPPPSC) and 397–494 (QQQQ…ISDD). Pro residues predominate over residues 406–415 (PAQPPAPPSA). 2 stretches are compositionally biased toward low complexity: residues 416–435 (TLPAGAAAPPSPPFSFQLPR) and 459–478 (YLSGSLSSGSLSGSESPSLD). Serine 490 and serine 492 each carry phosphoserine; by RPS6KA1.

As to quaternary structure, associates with the cytoplasmic CCR4-NOT deadenylase to trigger ARE-containing mRNA deadenylation and decay processes. Interacts with CNOT7; this interaction is inhibited in response to phorbol 12-myristate 13-acetate (PMA) treatment in a p38 MAPK-dependent manner. Interacts with CNOT6L. Phosphorylated by RPS6KA1 at Ser-490 and Ser-492 upon phorbol 12-myristate 13-acetate (PMA) treatment; this phosphorylation results in dissociation of the CCR4-NOT-deadenylase complex and induces p38 MAPK-mediated stabilization of the low-density lipoprotein (LDL) receptor (LDLR) mRNA. Phosphorylation occurs during early preadipocyte differentiation. Expressed mainly in the basal epidermal layer, weakly in the suprabasal epidermal layers. Expressed in epidermal keratinocytes (at protein level). Expressed in oocytes.

It is found in the nucleus. It localises to the cytoplasm. Zinc-finger RNA-binding protein that destabilizes several cytoplasmic AU-rich element (ARE)-containing mRNA transcripts by promoting their poly(A) tail removal or deadenylation, and hence provide a mechanism for attenuating protein synthesis. Acts as a 3'-untranslated region (UTR) ARE mRNA-binding adapter protein to communicate signaling events to the mRNA decay machinery. Functions by recruiting the CCR4-NOT deadenylase complex and probably other components of the cytoplasmic RNA decay machinery to the bound ARE-containing mRNAs, and hence promotes ARE-mediated mRNA deadenylation and decay processes. Binds to 3'-UTR ARE of numerous mRNAs. Promotes ARE-containing mRNA decay of the low-density lipoprotein (LDL) receptor (LDLR) mRNA in response to phorbol 12-myristate 13-acetate (PMA) treatment in a p38 MAPK-dependent manner. Positively regulates early adipogenesis by promoting ARE-mediated mRNA decay of immediate early genes (IEGs). Plays a role in mature peripheral neuron integrity by promoting ARE-containing mRNA decay of the transcriptional repressor REST mRNA. Plays a role in ovulation and oocyte meiotic maturation by promoting ARE-mediated mRNA decay of the luteinizing hormone receptor LHCGR mRNA. Acts as a negative regulator of erythroid cell differentiation: promotes glucocorticoid-induced self-renewal of erythroid cells by binding mRNAs that are induced or highly expressed during terminal erythroid differentiation and promotes their degradation, preventing erythroid cell differentiation. In association with ZFP36L1 maintains quiescence on developing B lymphocytes by promoting ARE-mediated decay of several mRNAs encoding cell cycle regulators that help B cells progress through the cell cycle, and hence ensuring accurate variable-diversity-joining (VDJ) recombination process and functional immune cell formation. Together with ZFP36L1 is also necessary for thymocyte development and prevention of T-cell acute lymphoblastic leukemia (T-ALL) transformation by promoting ARE-mediated mRNA decay of the oncogenic transcription factor NOTCH1 mRNA. The protein is mRNA decay activator protein ZFP36L2 of Homo sapiens (Human).